Here is a 267-residue protein sequence, read N- to C-terminus: Hydroxyethylthiazole kinase (267 aa).

Residue methionine 46 participates in substrate binding. 2 residues coordinate ATP: arginine 122 and serine 168. A substrate-binding site is contributed by glycine 195.

The protein belongs to the Thz kinase family. It depends on Mg(2+) as a cofactor.

It catalyses the reaction 5-(2-hydroxyethyl)-4-methylthiazole + ATP = 4-methyl-5-(2-phosphooxyethyl)-thiazole + ADP + H(+). Its pathway is cofactor biosynthesis; thiamine diphosphate biosynthesis; 4-methyl-5-(2-phosphoethyl)-thiazole from 5-(2-hydroxyethyl)-4-methylthiazole: step 1/1. Functionally, catalyzes the phosphorylation of the hydroxyl group of 4-methyl-5-beta-hydroxyethylthiazole (THZ). The polypeptide is Hydroxyethylthiazole kinase (Nitratidesulfovibrio vulgaris (strain DP4) (Desulfovibrio vulgaris)).